The following is a 146-amino-acid chain: 3-hydroxyacyl-[acyl-carrier-protein] dehydratase FabZ (146 aa).

H49 is an active-site residue.

The protein belongs to the thioester dehydratase family. FabZ subfamily.

The protein resides in the cytoplasm. The catalysed reaction is a (3R)-hydroxyacyl-[ACP] = a (2E)-enoyl-[ACP] + H2O. Functionally, involved in unsaturated fatty acids biosynthesis. Catalyzes the dehydration of short chain beta-hydroxyacyl-ACPs and long chain saturated and unsaturated beta-hydroxyacyl-ACPs. This chain is 3-hydroxyacyl-[acyl-carrier-protein] dehydratase FabZ, found in Pseudomonas syringae pv. tomato (strain ATCC BAA-871 / DC3000).